Reading from the N-terminus, the 446-residue chain is Histidine--tRNA ligase (446 aa).

It belongs to the class-II aminoacyl-tRNA synthetase family. In terms of assembly, homodimer.

Its subcellular location is the cytoplasm. It catalyses the reaction tRNA(His) + L-histidine + ATP = L-histidyl-tRNA(His) + AMP + diphosphate + H(+). In Burkholderia vietnamiensis (strain G4 / LMG 22486) (Burkholderia cepacia (strain R1808)), this protein is Histidine--tRNA ligase.